The chain runs to 552 residues: Gamma-aminobutyric acid receptor subunit alpha-4 (552 aa).

An N-terminal signal peptide occupies residues Met-1–Gly-35. The Extracellular segment spans residues Gln-36–Phe-259. Residue Asn-47 is glycosylated (N-linked (GlcNAc...) asparagine). Arg-100 lines the 4-aminobutanoate pocket. Asn-144 and Asn-157 each carry an N-linked (GlcNAc...) asparagine glycan. Thr-163 is a 4-aminobutanoate binding site. Cys-172 and Cys-186 form a disulfide bridge. Residues Met-260–Ile-280 traverse the membrane as a helical segment. Residues Asn-281 to Ser-284 lie on the Cytoplasmic side of the membrane. A helical transmembrane segment spans residues Val-285–Ser-305. Over Ala-306 to Ala-318 the chain is Extracellular. The helical transmembrane segment at Met-319–Asn-341 threads the bilayer. Topologically, residues Tyr-342–Lys-515 are cytoplasmic. Disordered regions lie at residues Lys-353 to Arg-480 and Gly-492 to Thr-513. The span at Ser-396–Val-406 shows a compositional bias: basic and acidic residues. Positions Gly-407–Ala-422 are enriched in polar residues. Residues Ser-445–Ser-458 show a composition bias toward low complexity. Residues Thr-500 to Ser-509 are compositionally biased toward pro residues. The helical transmembrane segment at Ile-516–Val-538 threads the bilayer. Topologically, residues Tyr-539 to Met-552 are extracellular.

Belongs to the ligand-gated ion channel (TC 1.A.9) family. Gamma-aminobutyric acid receptor (TC 1.A.9.5) subfamily. GABRA4 sub-subfamily. Heteropentamer, formed by a combination of alpha (GABRA1-6), beta (GABRB1-3), gamma (GABRG1-3), delta (GABRD), epsilon (GABRE), rho (GABRR1-3), pi (GABRP) and theta (GABRQ) chains, each subunit exhibiting distinct physiological and pharmacological properties. In terms of tissue distribution, expressed in the brain.

Its subcellular location is the cell membrane. The protein localises to the postsynaptic cell membrane. The enzyme catalyses chloride(in) = chloride(out). Potentiated by gaboxadol. Potentiated by histamine. Functionally, alpha subunit of the heteropentameric ligand-gated chloride channel gated by gamma-aminobutyric acid (GABA), a major inhibitory neurotransmitter in the brain. GABA-gated chloride channels, also named GABA(A) receptors (GABAAR), consist of five subunits arranged around a central pore and contain GABA active binding site(s) located at the alpha and beta subunit interface(s). Alpha-4/GABRA4 subunit often assembles with delta or gamma-2 subunits, in combination with beta subunits. When activated by GABA, GABAARs selectively allow the flow of chloride anions across the cell membrane down their electrochemical gradient. GABAARs containing alpha-4 are predominantly extrasynaptic, contributing to tonic inhibition in dentate granule cells and thalamic relay neurons. Extrasynaptic alpha-4-containing GABAARs control levels of excitability and network activity. GABAAR containing alpha-4-beta-3-delta subunits can simultaneously bind GABA and histamine where histamine binds at the interface of two neighboring beta subunits, which may be involved in the regulation of sleep and wakefulness. In Mus musculus (Mouse), this protein is Gamma-aminobutyric acid receptor subunit alpha-4.